A 219-amino-acid chain; its full sequence is Thiamine-phosphate synthase (219 aa).

4-amino-2-methyl-5-(diphosphooxymethyl)pyrimidine-binding positions include 48-52 (QFRQK) and asparagine 84. Aspartate 85 and aspartate 104 together coordinate Mg(2+). Serine 123 contacts 4-amino-2-methyl-5-(diphosphooxymethyl)pyrimidine. 2-[(2R,5Z)-2-carboxy-4-methylthiazol-5(2H)-ylidene]ethyl phosphate is bound at residue 150 to 152 (TQS). Lysine 153 contacts 4-amino-2-methyl-5-(diphosphooxymethyl)pyrimidine. Residues glycine 181 and 199–200 (IS) contribute to the 2-[(2R,5Z)-2-carboxy-4-methylthiazol-5(2H)-ylidene]ethyl phosphate site.

The protein belongs to the thiamine-phosphate synthase family. It depends on Mg(2+) as a cofactor.

The enzyme catalyses 2-[(2R,5Z)-2-carboxy-4-methylthiazol-5(2H)-ylidene]ethyl phosphate + 4-amino-2-methyl-5-(diphosphooxymethyl)pyrimidine + 2 H(+) = thiamine phosphate + CO2 + diphosphate. The catalysed reaction is 2-(2-carboxy-4-methylthiazol-5-yl)ethyl phosphate + 4-amino-2-methyl-5-(diphosphooxymethyl)pyrimidine + 2 H(+) = thiamine phosphate + CO2 + diphosphate. It carries out the reaction 4-methyl-5-(2-phosphooxyethyl)-thiazole + 4-amino-2-methyl-5-(diphosphooxymethyl)pyrimidine + H(+) = thiamine phosphate + diphosphate. It participates in cofactor biosynthesis; thiamine diphosphate biosynthesis; thiamine phosphate from 4-amino-2-methyl-5-diphosphomethylpyrimidine and 4-methyl-5-(2-phosphoethyl)-thiazole: step 1/1. Condenses 4-methyl-5-(beta-hydroxyethyl)thiazole monophosphate (THZ-P) and 2-methyl-4-amino-5-hydroxymethyl pyrimidine pyrophosphate (HMP-PP) to form thiamine monophosphate (TMP). This is Thiamine-phosphate synthase from Helicobacter pylori (strain Shi470).